Here is a 359-residue protein sequence, read N- to C-terminus: Non-functional pseudokinase ZRK2 (359 aa).

A compositionally biased stretch (basic residues) spans 1-10; sequence MKSMVKKLKQ. Residues 1-20 are disordered; the sequence is MKSMVKKLKQSLRSGSLEKR. Positions 64–356 constitute a Protein kinase domain; it reads LKATSNFGSS…KELKQIETLF (293 aa). Residues 70 to 78 and lysine 97 contribute to the ATP site; that span reads FGSSCFVTA.

The protein belongs to the protein kinase superfamily. Ser/Thr protein kinase family. ZRK subfamily.

This Arabidopsis thaliana (Mouse-ear cress) protein is Non-functional pseudokinase ZRK2.